The chain runs to 943 residues: Zinc finger BED domain-containing protein 39 (943 aa).

The segment at methionine 1 to threonine 99 is disordered. Positions proline 12–valine 21 are enriched in basic and acidic residues. Residues serine 50–serine 72 are compositionally biased toward low complexity. Over residues proline 73–glutamine 85 the composition is skewed to basic and acidic residues. Residues asparagine 184–phenylalanine 235 form a BED-type; degenerate zinc finger. 2 disordered regions span residues tyrosine 242–serine 315 and arginine 328–proline 348. Polar residues predominate over residues threonine 262 to alanine 276. Residues serine 277 to glycine 292 show a composition bias toward low complexity. Residues arginine 328 to proline 338 are compositionally biased toward polar residues.

In terms of tissue distribution, expressed in distal tip cells and in germline cells.

Its subcellular location is the nucleus. The protein resides in the cytoplasm. Regulates the timing and orientation of distal tip cell migration during gonadal development. May act in parallel to cacn-1 and Rac GTPases to control the anterior and posterior migration of distal tip cells. The polypeptide is Zinc finger BED domain-containing protein 39 (Caenorhabditis elegans).